The sequence spans 495 residues: UDP-N-acetylmuramoyl-L-alanyl-D-glutamate--2,6-diaminopimelate ligase (495 aa).

Residues L27, S29, and 44 to 46 each bind UDP-N-acetyl-alpha-D-muramoyl-L-alanyl-D-glutamate; that span reads HQT. 116–122 provides a ligand contact to ATP; it reads GTNGKTT. Residues N157, 158–159, S185, Q191, and R193 contribute to the UDP-N-acetyl-alpha-D-muramoyl-L-alanyl-D-glutamate site; that span reads TT. Residue K225 is modified to N6-carboxylysine. Residues R390, 414–417, G465, and E469 contribute to the meso-2,6-diaminopimelate site; that span reads DNPR. The Meso-diaminopimelate recognition motif motif lies at 414 to 417; the sequence is DNPR.

It belongs to the MurCDEF family. MurE subfamily. It depends on Mg(2+) as a cofactor. Post-translationally, carboxylation is probably crucial for Mg(2+) binding and, consequently, for the gamma-phosphate positioning of ATP.

The protein localises to the cytoplasm. It catalyses the reaction UDP-N-acetyl-alpha-D-muramoyl-L-alanyl-D-glutamate + meso-2,6-diaminopimelate + ATP = UDP-N-acetyl-alpha-D-muramoyl-L-alanyl-gamma-D-glutamyl-meso-2,6-diaminopimelate + ADP + phosphate + H(+). Its pathway is cell wall biogenesis; peptidoglycan biosynthesis. In terms of biological role, catalyzes the addition of meso-diaminopimelic acid to the nucleotide precursor UDP-N-acetylmuramoyl-L-alanyl-D-glutamate (UMAG) in the biosynthesis of bacterial cell-wall peptidoglycan. The sequence is that of UDP-N-acetylmuramoyl-L-alanyl-D-glutamate--2,6-diaminopimelate ligase from Photorhabdus laumondii subsp. laumondii (strain DSM 15139 / CIP 105565 / TT01) (Photorhabdus luminescens subsp. laumondii).